The chain runs to 457 residues: GTPase Era, mitochondrial (457 aa).

A mitochondrion-targeting transit peptide spans 1 to 18; sequence MAFRVSISTFGKSLRVRR. The 244-residue stretch at 107–350 folds into the Era-type G domain; the sequence is KVLRVAIIGA…RYLVVGAKPG (244 aa). Residues 115 to 122 form a G1 region; the sequence is GAPNAGKS. 115 to 122 serves as a coordination point for GTP; that stretch reads GAPNAGKS. The G2 stretch occupies residues 141–145; that stretch reads HTTRA. A G3 region spans residues 162-165; it reads DTPG. Residues 162-166 and 231-234 each bind GTP; these read DTPGL and NKVD. The tract at residues 231–234 is G4; the sequence is NKVD. Basic and acidic residues predominate over residues 270 to 290; that stretch reads AERRTDREARTSGSGDEEKPG. Residues 270 to 300 form a disordered region; sequence AERRTDREARTSGSGDEEKPGGDVADGEGSE. The segment at 328 to 330 is G5; it reads VSA. The KH type-2 domain maps to 376–457; sequence LLEYLPKEVP…KLRLSVKVKN (82 aa).

Belongs to the TRAFAC class TrmE-Era-EngA-EngB-Septin-like GTPase superfamily. Era GTPase family.

It localises to the mitochondrion matrix. Its subcellular location is the mitochondrion inner membrane. Functionally, probable GTPase that plays a role in the mitochondrial ribosomal small subunit assembly. Specifically binds the 12S mitochondrial rRNA (12S mt-rRNA) to a 33 nucleotide section delineating the 3' terminal stem-loop region. May act as a chaperone that protects the 12S mt-rRNA on the 28S mitoribosomal subunit during ribosomal small subunit assembly. In Salmo salar (Atlantic salmon), this protein is GTPase Era, mitochondrial (eral1).